The following is a 71-amino-acid chain: High-potential iron-sulfur protein isozyme 2 (71 aa).

The [4Fe-4S] cluster site is built by Cys34, Cys37, Cys51, and Cys65.

Belongs to the high-potential iron-sulfur protein (HiPIP) family. Homodimer.

In terms of biological role, specific class of high-redox-potential 4Fe-4S ferredoxins. Functions in anaerobic electron transport in most purple and in some other photosynthetic bacteria and in at least one genus (Paracoccus) of halophilic, denitrifying bacteria. This is High-potential iron-sulfur protein isozyme 2 (hip2) from Ectothiorhodospira shaposhnikovii (Ectothiorhodospira vacuolata).